The sequence spans 321 residues: Peroxidase 28 (321 aa).

Positions 1–21 (MKIATFSVLLLLLFIFPVALA) are cleaved as a signal peptide. 4 disulfides stabilise this stretch: Cys-32/Cys-111, Cys-65/Cys-70, Cys-117/Cys-317, and Cys-196/Cys-228. The active-site Proton acceptor is His-63. Ca(2+) contacts are provided by Asp-64, Val-67, Gly-69, Asp-71, and Ser-73. Pro-159 contributes to the substrate binding site. His-189 contributes to the heme b binding site. Thr-190 contributes to the Ca(2+) binding site. Residues Asp-238, Thr-244, and Asp-249 each contribute to the Ca(2+) site.

Belongs to the peroxidase family. Classical plant (class III) peroxidase subfamily. The cofactor is heme b. Requires Ca(2+) as cofactor.

It is found in the secreted. The enzyme catalyses 2 a phenolic donor + H2O2 = 2 a phenolic radical donor + 2 H2O. Functionally, removal of H(2)O(2), oxidation of toxic reductants, biosynthesis and degradation of lignin, suberization, auxin catabolism, response to environmental stresses such as wounding, pathogen attack and oxidative stress. These functions might be dependent on each isozyme/isoform in each plant tissue. The polypeptide is Peroxidase 28 (PER28) (Arabidopsis thaliana (Mouse-ear cress)).